A 229-amino-acid chain; its full sequence is uncharacterized protein (229 aa).

22 to 29 (GMIAFGKT) lines the ATP pocket.

This is an uncharacterized protein from Mycoplasma pneumoniae (strain ATCC 29342 / M129 / Subtype 1) (Mycoplasmoides pneumoniae).